A 1051-amino-acid polypeptide reads, in one-letter code: Carbamoyl phosphate synthase large chain (1051 aa).

The interval 1 to 399 is carboxyphosphate synthetic domain; it reads MKETPKKVLV…SLQKAVRMLD (399 aa). Positions 127, 167, 173, 174, 206, 208, 213, 239, 240, 241, 282, and 296 each coordinate ATP. In terms of domain architecture, ATP-grasp 1 spans 131–325; it reads RETMIENNLP…LAYVSAKLAL (195 aa). Residues Gln282, Glu296, and Asn298 each contribute to the Mg(2+) site. Mn(2+) is bound by residues Gln282, Glu296, and Asn298. The tract at residues 400-548 is oligomerization domain; the sequence is IGEPGVVGGK…LTYNGTEDDL (149 aa). A carbamoyl phosphate synthetic domain region spans residues 549-930; sequence EFSQGNKLLI…LKSWLSSIPN (382 aa). Residues 673-863 form the ATP-grasp 2 domain; sequence SKLLDKLGIS…LINESMKAIF (191 aa). Residues Arg709, Lys748, Ile750, Glu755, Gly779, Val780, His781, Ser782, Gln822, and Glu834 each contribute to the ATP site. Residues Gln822, Glu834, and Asn836 each coordinate Mg(2+). Residues Gln822, Glu834, and Asn836 each contribute to the Mn(2+) site. An MGS-like domain is found at 930 to 1051; sequence NRIPNKNGIA…FEISEYGGGI (122 aa). Residues 931–1051 form an allosteric domain region; the sequence is RIPNKNGIAL…FEISEYGGGI (121 aa).

This sequence belongs to the CarB family. In terms of assembly, composed of two chains; the small (or glutamine) chain promotes the hydrolysis of glutamine to ammonia, which is used by the large (or ammonia) chain to synthesize carbamoyl phosphate. Tetramer of heterodimers (alpha,beta)4. Requires Mg(2+) as cofactor. Mn(2+) serves as cofactor.

The catalysed reaction is hydrogencarbonate + L-glutamine + 2 ATP + H2O = carbamoyl phosphate + L-glutamate + 2 ADP + phosphate + 2 H(+). The enzyme catalyses hydrogencarbonate + NH4(+) + 2 ATP = carbamoyl phosphate + 2 ADP + phosphate + 2 H(+). The protein operates within amino-acid biosynthesis; L-arginine biosynthesis; carbamoyl phosphate from bicarbonate: step 1/1. It participates in pyrimidine metabolism; UMP biosynthesis via de novo pathway; (S)-dihydroorotate from bicarbonate: step 1/3. Large subunit of the glutamine-dependent carbamoyl phosphate synthetase (CPSase). CPSase catalyzes the formation of carbamoyl phosphate from the ammonia moiety of glutamine, carbonate, and phosphate donated by ATP, constituting the first step of 2 biosynthetic pathways, one leading to arginine and/or urea and the other to pyrimidine nucleotides. The large subunit (synthetase) binds the substrates ammonia (free or transferred from glutamine from the small subunit), hydrogencarbonate and ATP and carries out an ATP-coupled ligase reaction, activating hydrogencarbonate by forming carboxy phosphate which reacts with ammonia to form carbamoyl phosphate. This Saccharolobus islandicus (strain M.16.27) (Sulfolobus islandicus) protein is Carbamoyl phosphate synthase large chain.